A 548-amino-acid polypeptide reads, in one-letter code: Chaperonin GroEL (548 aa).

ATP contacts are provided by residues 30 to 33, Lys-51, 87 to 91, Gly-415, 479 to 481, and Asp-495; these read TLGP, DGTTT, and NAA.

This sequence belongs to the chaperonin (HSP60) family. Forms a cylinder of 14 subunits composed of two heptameric rings stacked back-to-back. Interacts with the co-chaperonin GroES.

The protein localises to the cytoplasm. The enzyme catalyses ATP + H2O + a folded polypeptide = ADP + phosphate + an unfolded polypeptide.. Its function is as follows. Together with its co-chaperonin GroES, plays an essential role in assisting protein folding. The GroEL-GroES system forms a nano-cage that allows encapsulation of the non-native substrate proteins and provides a physical environment optimized to promote and accelerate protein folding. This chain is Chaperonin GroEL, found in Aliivibrio fischeri (strain MJ11) (Vibrio fischeri).